The primary structure comprises 332 residues: UPF0194 membrane protein YbhG (332 aa).

Positions 1 to 16 (MMKKPVVIGLAVVVLA) are cleaved as a signal peptide. Residues 141-210 (RTISANDLEN…NLQDSTLIAP (70 aa)) are a coiled coil.

It belongs to the UPF0194 family.

The protein resides in the periplasm. This is UPF0194 membrane protein YbhG (ybhG) from Shigella flexneri.